A 228-amino-acid chain; its full sequence is UPF0173 metal-dependent hydrolase lwe1590 (228 aa).

The protein belongs to the UPF0173 family.

This chain is UPF0173 metal-dependent hydrolase lwe1590, found in Listeria welshimeri serovar 6b (strain ATCC 35897 / DSM 20650 / CCUG 15529 / CIP 8149 / NCTC 11857 / SLCC 5334 / V8).